The primary structure comprises 541 residues: uncharacterized protein (541 aa).

A run of 5 helical transmembrane segments spans residues 10–32, 39–57, 62–84, 91–113, and 146–168; these read LNNQ…KINI, SSAI…YTLP, TLGL…FFSL, LSLG…TYLF, and APAA…IQII. RCK C-terminal domains lie at 183 to 260 and 268 to 352; these read LNKE…DDLE and TPVD…IFGN. Transmembrane regions (helical) follow at residues 357 to 375, 385 to 407, 428 to 447, 452 to 474, 481 to 500, and 515 to 537; these read SYNF…GFIL, SGIF…SNIY, GLVL…ILAT, GLQL…VFIC, PFLS…PGLA, and YATV…IFIV.

Belongs to the AAE transporter (TC 2.A.81) family.

Its subcellular location is the cell membrane. This is an uncharacterized protein from Desulfotalea psychrophila (strain LSv54 / DSM 12343).